The sequence spans 248 residues: MDKVVATAAEAVADIANGSSLAVGGFGLCGIPEALIAALVDSGVTDLETVSNNCGIDGVGLGLLLQHKRIRRTVSSYVGENKEFARQFLAGELEVELTPQGTLAERLRAGGMGIPAFYTPAGVGTQVADGGLPWRYDASGGVAVVSPAKETREFDGVTYVLERGIRTDFALVHAWQGDRHGNLMYRHAAANFNPECASAGRITIAEVEHLVEPGEIDPATVHTPGVFVHRVVHVPNPAKKIERETVRQ.

24 to 30 (GGFGLCG) is a CoA binding site.

It belongs to the 3-oxoacid CoA-transferase subunit A family. As to quaternary structure, heterodimer of a subunit A and a subunit B.

The catalysed reaction is a 3-oxo acid + succinyl-CoA = a 3-oxoacyl-CoA + succinate. The chain is Probable succinyl-CoA:3-ketoacid coenzyme A transferase subunit A (scoA) from Mycobacterium bovis (strain ATCC BAA-935 / AF2122/97).